A 328-amino-acid polypeptide reads, in one-letter code: 5'-AMP-activated protein kinase subunit gamma (328 aa).

4 CBS domains span residues 42–103, 123–186, 199–259, and 268–328; these read VSYR…PDKF, IQPY…CKEI, ISTN…YNDL, and MRRS…FAES. ADP-binding positions include Ile47, Arg150, Arg151, 171–174, 227–228, and 297–299; these read TQYR, SS, and RVH. Arg150 contributes to the AMP binding site. Residue Arg150 participates in ATP binding. 227-228 serves as a coordination point for AMP; the sequence is SS. An ATP-binding site is contributed by 227 to 228; the sequence is SS. ATP-binding positions include Arg300 and 313-318; that span reads VLTLSD. 315-318 lines the ADP pocket; it reads TLSD. 315-318 lines the AMP pocket; it reads TLSD.

This sequence belongs to the 5'-AMP-activated protein kinase gamma subunit family. AMPK is a heterotrimer of an alpha catalytic subunit, a beta and a gamma non-catalytic subunits.

Its subcellular location is the nucleus. The protein resides in the cytoplasm. Functionally, adenine nucleotides-binding subunit gamma of AMP-activated protein kinase (AMPK), an energy sensor protein kinase that plays a key role in regulating cellular energy metabolism. In response to reduction of intracellular ATP levels, AMPK activates energy-producing pathways and inhibits energy-consuming processes: inhibits protein, carbohydrate and lipid biosynthesis, as well as cell growth and proliferation. AMPK acts via direct phosphorylation of metabolic enzymes, and by longer-term effects via phosphorylation of transcription regulators. Gamma non-catalytic subunit mediates binding to AMP, ADP and ATP, leading to activate or inhibit AMPK: AMP-binding results in allosteric activation of alpha catalytic subunit (SNF1) both by inducing phosphorylation and preventing dephosphorylation of catalytic subunits. This chain is 5'-AMP-activated protein kinase subunit gamma (SNF4), found in Kluyveromyces lactis (strain ATCC 8585 / CBS 2359 / DSM 70799 / NBRC 1267 / NRRL Y-1140 / WM37) (Yeast).